Consider the following 317-residue polypeptide: Ribosome production factor 2 homolog (317 aa).

Residues 28–240 (KTAIFLRGNA…IRRVQPAESD (213 aa)) form the Brix domain. The disordered stretch occupies residues 287-317 (MKGLKRSVEEREDSENEEVEIEEDVISDASE). Residues Ser-293, Ser-300, Ser-313, and Ser-316 each carry the phosphoserine modification. Over residues 296–317 (EREDSENEEVEIEEDVISDASE) the composition is skewed to acidic residues.

The protein belongs to the RPF2 family. In terms of assembly, component of a hexameric 5S RNP precursor complex, composed of 5S RNA, rrs1, rpf2, rpl5a/rpl5b, rpl11a/rpl11b and syo1; this complex acts as a precursor for ribosome assembly.

Its subcellular location is the nucleus. It is found in the nucleolus. This is Ribosome production factor 2 homolog from Schizosaccharomyces pombe (strain 972 / ATCC 24843) (Fission yeast).